An 842-amino-acid polypeptide reads, in one-letter code: MVTVGNYCETEGPAGPAWTQNGLSPCFFFTLVPSTLLTLGVLALVLVLPRRRREVPAGPEELSWAAGPRVAPYVLQLFLATLQMALPLAGLAGRVGTARGVRLPGYLLLASVLESLASVCGLWLLVVERSQARQSLAMGVWMKFRHSLGLLLLWTVTFAAENLALVSWNSPQWWWARADLGQQVQFGLWVLRYVTSGGLFILGLWAPGLRPQSYTLHVHEEDQDVGGNQGRSTDRRSTWRDLGRKLRLLSSYLWPRGSPSLQLIVLICLGLMGLERALNVLVPIFYRDIVNLLTAKAPWSSLAWTVTTYVFLKFLQGGGTGSTGFVSNLRTFLWIRVQQFTSRGVELRLFSHLHELSLRWHLGRRTGEVLRIVDRGTSSVTGLLSYLVFSIIPTLADIIIGIIYFSMFFNAWFGLIVFLCMSLYLILTIVVTEWRAKFRRDMNTQENATRARAVDSLLNFETVKYYGAEGYEVDRYREAILKFQGLEWKSTASLVVLNQTQNLVIGLGLLAGSLLCAYFVSEQKLQVGDFVLFGTYITQLYMPLNWFGTYYRMIQTNFIDMENMFDLLKEETEVKDVPGAGPLRFHKGRIEFENVHFSYADGQETLQDVSFTVMPGQTVALVGPSGAGKSTILRLLFRFYDISSGCIRIDGQDISQVTQISLRSHIGVVPQDTVLFNDTIANNIRYGRVTAGDSEVEAAAQAAGIHDAILSFPEGYETQVGERGLKLSGGEKQRVAIARTILKAPDIILLDEATSALDTSNERAIQASLAKVCTNRTTIVIAHRLSTVVNADQILVIKDGCIIERGRHEALLSRGGVYAEMWQLQQQGQETVPEESKPQDTA.

At 1–26 (MVTVGNYCETEGPAGPAWTQNGLSPC) the chain is on the lumenal side. Positions 1–205 (MVTVGNYCET…SGGLFILGLW (205 aa)) are required for the lysosomal targeting. A required for ATPase activity region spans residues 1-236 (MVTVGNYCET…GNQGRSTDRR (236 aa)). A disulfide bond links cysteine 8 and cysteine 26. A helical transmembrane segment spans residues 27-47 (FFFTLVPSTLLTLGVLALVLV). Residues 48–72 (LPRRRREVPAGPEELSWAAGPRVAP) are Cytoplasmic-facing. Residues 73–93 (YVLQLFLATLQMALPLAGLAG) traverse the membrane as a helical segment. Residues 94-106 (RVGTARGVRLPGY) are Lumenal-facing. The chain crosses the membrane as a helical span at residues 107 to 127 (LLLASVLESLASVCGLWLLVV). At 128–147 (ERSQARQSLAMGVWMKFRHS) the chain is on the cytoplasmic side. The chain crosses the membrane as a helical span at residues 148-168 (LGLLLLWTVTFAAENLALVSW). Residues 169–185 (NSPQWWWARADLGQQVQ) lie on the Lumenal side of the membrane. Residues 186 to 206 (FGLWVLRYVTSGGLFILGLWA) traverse the membrane as a helical segment. Topologically, residues 207–263 (PGLRPQSYTLHVHEEDQDVGGNQGRSTDRRSTWRDLGRKLRLLSSYLWPRGSPSLQL) are cytoplasmic. The chain crosses the membrane as a helical span at residues 264-284 (IVLICLGLMGLERALNVLVPI). One can recognise an ABC transmembrane type-1 domain in the interval 265 to 556 (VLICLGLMGL…FGTYYRMIQT (292 aa)). The Lumenal portion of the chain corresponds to 285 to 291 (FYRDIVN). The helical transmembrane segment at 292–312 (LLTAKAPWSSLAWTVTTYVFL) threads the bilayer. Topologically, residues 313 to 375 (KFLQGGGTGS…TGEVLRIVDR (63 aa)) are cytoplasmic. The helical transmembrane segment at 376-396 (GTSSVTGLLSYLVFSIIPTLA) threads the bilayer. Position 397 (aspartate 397) is a topological domain, lumenal. Residues 398–418 (IIIGIIYFSMFFNAWFGLIVF) traverse the membrane as a helical segment. The Cytoplasmic portion of the chain corresponds to 419–499 (LCMSLYLILT…STASLVVLNQ (81 aa)). The helical transmembrane segment at 500–520 (TQNLVIGLGLLAGSLLCAYFV) threads the bilayer. Topologically, residues 521–529 (SEQKLQVGD) are lumenal. A helical transmembrane segment spans residues 530–550 (FVLFGTYITQLYMPLNWFGTY). At 551–842 (YRMIQTNFID…PEESKPQDTA (292 aa)) the chain is on the cytoplasmic side. The ABC transporter domain maps to 590 to 824 (IEFENVHFSY…GGVYAEMWQL (235 aa)). Residues tyrosine 599 and 623–634 (GPSGAGKSTILR) each bind ATP.

It belongs to the ABC transporter superfamily. ABCB family. Heavy Metal importer (TC 3.A.1.210) subfamily. Homodimer. Post-translationally, N-glycosylated.

It localises to the cell membrane. It is found in the mitochondrion outer membrane. Its subcellular location is the endoplasmic reticulum membrane. The protein resides in the golgi apparatus membrane. The protein localises to the endosome membrane. It localises to the lysosome membrane. It is found in the late endosome membrane. Its subcellular location is the early endosome membrane. The protein resides in the secreted. The protein localises to the extracellular exosome. It localises to the mitochondrion. It is found in the endosome. Its subcellular location is the multivesicular body membrane. The protein resides in the melanosome membrane. The catalysed reaction is coproporphyrin III(in) + ATP + H2O = coproporphyrin III(out) + ADP + phosphate + H(+). The enzyme catalyses coproporphyrinogen III(in) + ATP + H2O = coproporphyrinogen III(out) + ADP + phosphate + H(+). It catalyses the reaction heme b(in) + ATP + H2O = heme b(out) + ADP + phosphate + H(+). It carries out the reaction pheophorbide a(in) + ATP + H2O = pheophorbide a(out) + ADP + phosphate + H(+). The catalysed reaction is protoporphyrin IX(in) + ATP + H2O = protoporphyrin IX(out) + ADP + phosphate + H(+). The enzyme catalyses coproporphyrin I(in) + ATP + H2O = coproporphyrin I(out) + ADP + phosphate + H(+). It catalyses the reaction uroporphyrin I(in) + ATP + H2O = uroporphyrin I(out) + ADP + phosphate + H(+). It carries out the reaction uroporphyrin III(in) + ATP + H2O = uroporphyrin III(out) + ADP + phosphate + H(+). In terms of biological role, ATP-dependent transporter that catalyzes the transport of a broad-spectrum of porphyrins from the cytoplasm to the extracellular space through the plasma membrane or into the vesicle lumen. May also function as an ATP-dependent importer of porphyrins from the cytoplasm into the mitochondria, in turn may participate in the de novo heme biosynthesis regulation and in the coordination of heme and iron homeostasis during phenylhydrazine stress. May play a key role in the early steps of melanogenesis producing PMEL amyloid fibrils. In vitro, it confers to cells a resistance to toxic metal such as arsenic and cadmium and against chemotherapeutics agent such as 5-fluorouracil, SN-38 and vincristin. In addition may play a role in the transition metal homeostasis. The sequence is that of ATP-binding cassette sub-family B member 6 from Mus musculus (Mouse).